A 234-amino-acid chain; its full sequence is Large ribosomal subunit protein uL1 (234 aa).

The protein belongs to the universal ribosomal protein uL1 family. Part of the 50S ribosomal subunit.

Its function is as follows. Binds directly to 23S rRNA. The L1 stalk is quite mobile in the ribosome, and is involved in E site tRNA release. In terms of biological role, protein L1 is also a translational repressor protein, it controls the translation of the L11 operon by binding to its mRNA. The polypeptide is Large ribosomal subunit protein uL1 (Salmonella gallinarum (strain 287/91 / NCTC 13346)).